The primary structure comprises 483 residues: Protein FIZZY-RELATED 2 (483 aa).

A disordered region spans residues methionine 1 to asparagine 28. Over residues threonine 7 to asparagine 28 the composition is skewed to polar residues. WD repeat units follow at residues glutamine 174 to leucine 211, glycine 215 to threonine 254, glycine 257 to serine 294, glycine 298 to lysine 337, glutamate 340 to serine 382, aspartate 384 to threonine 425, and glycine 428 to asparagine 467.

This sequence belongs to the WD repeat CDC20/Fizzy family. As to quaternary structure, associates with the APC/C complex. Interacts with CDC20-1, CDC20-2, CYCA1-1, CYCA1-2, CYCA3-4, CYCB1-1 and CYCB1-2. Binds to GIG1 and PYM. In terms of tissue distribution, expressed in seedlings, flowers, leaves and roots. Expressed in the differentiating cell files of the root elongation zone.

It localises to the nucleus. The protein operates within protein modification; protein ubiquitination. In terms of biological role, activator protein that regulates the ubiquitin ligase activity and substrate specificity of the anaphase promoting complex/cyclosome (APC/C). Necessary and sufficient for endoreduplication and correct cell expansion. Controls meristem size by stimulating endoreduplication in the elongation zone. The chain is Protein FIZZY-RELATED 2 (FZR2) from Arabidopsis thaliana (Mouse-ear cress).